Reading from the N-terminus, the 116-residue chain is Omega-ctenitoxin-Pn3a (116 aa).

A signal peptide spans 1 to 19 (MKMKLLGIILLVSFPFVLG). A propeptide spanning residues 20–38 (FAGIPIEEGENSVEVGEVE) is cleaved from the precursor. 7 cysteine pairs are disulfide-bonded: Cys-41–Cys-58, Cys-48–Cys-64, Cys-55–Cys-90, Cys-57–Cys-78, Cys-66–Cys-76, Cys-96–Cys-102, and Cys-106–Cys-111. Residue His-115 is modified to Histidine amide.

Belongs to the neurotoxin 04 (omega-agtx) family. 03 (type II/III omega-agtx) subfamily. In terms of tissue distribution, expressed by the venom gland.

Its subcellular location is the secreted. This toxin is a potent and practically irreversible antagonist of both Cav2.1/CACNA1A and Cav2.2/CACNA1B calcium channels, while it displays a partial and rapidly reversible block of Cav2.3/CACNA1E calcium channels and no effect on Cav3/CACNA1 calcium channels. Inhibits glutamate uptake from rat brain synaptosomes by an interaction between cysteines from both glutamate transporter and toxin. Blocks potassium-induced exocytosis of synaptic vesicles in brain cortical synaptosomes (IC(50)=1.1 nM). In rat brain, inhibits glutamate release, neuronal death and loss of neurotransmission in the hippocampus resulting from ischemia. In vivo, induces rapid general flaccid paralysis followed by death in 10-30 minutes at dose levels of 5 ug per mouse. This chain is Omega-ctenitoxin-Pn3a, found in Phoneutria nigriventer (Brazilian armed spider).